The primary structure comprises 179 residues: ADP-ribosylation factor (179 aa).

G2 is lipidated: N-myristoyl glycine. GTP-binding positions include 24–31, 67–71, and 126–129; these read GLDAAGKT, DVGGQ, and NKQD.

It belongs to the small GTPase superfamily. Arf family.

The protein localises to the golgi apparatus. In terms of biological role, GTP-binding protein involved in protein trafficking; may modulate vesicle budding and uncoating within the Golgi apparatus. The chain is ADP-ribosylation factor (ARF1) from Candida albicans (strain SC5314 / ATCC MYA-2876) (Yeast).